The sequence spans 487 residues: Gasdermin-D (487 aa).

At Y38 the chain carries Phosphotyrosine. C39, C57, and C77 each carry S-(2-succinyl)cysteine. Transmembrane regions (beta stranded) follow at residues 92 to 98 (QGRVMLS) and 104 to 109 (KISGGA). An S-(2-succinyl)cysteine modification is found at C122. Beta stranded transmembrane passes span 181–187 (GSGQFTL) and 192–198 (CLKGEGK). Residues C192 and C265 each carry the S-(2-succinyl)cysteine modification. C192 carries the S-palmitoyl cysteine lipid modification. The segment at 278–298 (IDEEELIEAADFQGLYAEVKA) is linker helix loop. S-(2-succinyl)cysteine is present on residues C299, C434, and C487.

Belongs to the gasdermin family. As to quaternary structure, homooligomer; homooligomeric ring-shaped pore complex containing 27-28 subunits when inserted in the membrane. Homooligomerization is promoted by the mTORC1 complex in macrophages. In response to a canonical inflammasome stimulus, such as nigericin, recruited to NLRP3 inflammasone with similar kinetics to that of uncleaved CASP1 precursor. Although this recruitment is also observed in the absence of PYCARD, it is more efficient in its presence. Cleavage at Asp-276 by CASP1 (mature and uncleaved precursor forms), CASP4/CASP11 or CASP8 relieves autoinhibition and is sufficient to initiate pyroptosis. Cleavage by CASP1 and CASP4/CASP11 is not strictly dependent on the consensus cleavage site on GSDMD but depends on an exosite interface on CASP1 that recognizes and binds the Gasdermin-D, C-terminal (GSDMD-CT) part. Cleavage by CASP8 takes place following inactivation of MAP3K7/TAK1 by Yersinia toxin YopJ. Cleavage at Asp-88 by CASP3 or CASP7 inactivates the ability to mediate pyroptosis, but generates the Gasdermin-D, p13 chain, which translocates to the nucleus and acts as a transcription regulator. Cleavage by papain allergen generates the Gasdermin-D, p40 chain. In terms of processing, palmitoylated at Cys-192 by ZDHHC5 and ZDHHC9 in response to microbial infection and danger signals. May also be palmitoylated by ZDHHC7. Palmitoylation takes place before cleavage by caspases (CASP1, CASP4, CASP5 or CASP8) and is required for membrane translocation and pore formation. Depalmitoylated by LYPLA2. Post-translationally, succination of Cys-192 by the Krebs cycle intermediate fumarate, which leads to S-(2-succinyl)cysteine residues, inhibits processing by caspases, and ability to initiate pyroptosis. Succination modification is catalyzed by a non-enzymatic reaction caused by an accumulation of fumarate. Glycosylated: O-GlcNAcylation by OGT leads to reduced cleavage by CASP4 and decreased LPS-induced endothelial cell pyroptosis. As to expression, highly expressed in brain endothelial cells.

It localises to the cytoplasm. It is found in the cytosol. The protein localises to the inflammasome. Its subcellular location is the cell membrane. The protein resides in the secreted. It localises to the mitochondrion membrane. It is found in the nucleus. With respect to regulation, the full-length protein before cleavage is inactive: intramolecular interactions between N- and C-terminal domains mediate autoinhibition in the absence of activation signal. The intrinsic pyroptosis-inducing activity is carried by the released N-terminal moiety (Gasdermin-D, N-terminal) following cleavage by inflammatory caspases CASP1, CASP4/CASP11 or CASP8. Cleavage at Asp-88 by CASP3 or CASP7 inactivates the ability to mediate pyroptosis. Pore formation is specifically inhibited by VHH(GSDMD-1) nanobody, protecting against excessive pyroptosis. Inhibited by small molecule NU6300, which covalently reacts with Cys-191, thereby preventing palmitoylation and pyroptosis. Precursor of a pore-forming protein that plays a key role in host defense against pathogen infection and danger signals. This form constitutes the precursor of the pore-forming protein: upon cleavage, the released N-terminal moiety (Gasdermin-D, N-terminal) binds to membranes and forms pores, triggering pyroptosis. Its function is as follows. Promotes pyroptosis in response to microbial infection and danger signals. Produced by the cleavage of gasdermin-D by inflammatory caspases CASP1 or CASP4/CASP11 in response to canonical, as well as non-canonical (such as cytosolic LPS) inflammasome activators. After cleavage, moves to the plasma membrane where it strongly binds to inner leaflet lipids, including monophosphorylated phosphatidylinositols, such as phosphatidylinositol 4-phosphate, bisphosphorylated phosphatidylinositols, such as phosphatidylinositol (4,5)-bisphosphate, as well as phosphatidylinositol (3,4,5)-bisphosphate, and more weakly to phosphatidic acid and phosphatidylserine. Homooligomerizes within the membrane and forms pores of 10-15 nanometers (nm) of inner diameter, allowing the release of mature interleukin-1 (IL1B and IL18) and triggering pyroptosis. Gasdermin pores also allow the release of mature caspase-7 (CASP7). In some, but not all, cells types, pyroptosis is followed by pyroptotic cell death, which is caused by downstream activation of ninjurin-1 (NINJ1), which mediates membrane rupture (cytolysis). Also forms pores in the mitochondrial membrane, resulting in release of mitochondrial DNA (mtDNA) into the cytosol. Gasdermin-D, N-terminal released from pyroptotic cells into the extracellular milieu rapidly binds to and kills both Gram-negative and Gram-positive bacteria, without harming neighboring mammalian cells, as it does not disrupt the plasma membrane from the outside due to lipid-binding specificity. Under cell culture conditions, also active against intracellular bacteria, such as Listeria monocytogenes. Also active in response to MAP3K7/TAK1 inactivation by Yersinia toxin YopJ, which triggers cleavage by CASP8 and subsequent activation. Required for mucosal tissue defense against enteric pathogens. Activation of the non-canonical inflammasome in brain endothelial cells can lead to excessive pyroptosis, leading to blood-brain barrier breakdown. Strongly binds to bacterial and mitochondrial lipids, including cardiolipin. Does not bind to unphosphorylated phosphatidylinositol, phosphatidylethanolamine nor phosphatidylcholine. In terms of biological role, transcription coactivator produced by the cleavage by CASP3 or CASP7 in the upper small intestine in response to dietary antigens. Required to maintain food tolerance in small intestine: translocates to the nucleus and acts as a coactivator for STAT1 to induce the transcription of CIITA and MHC class II molecules, which in turn induce type 1 regulatory T (Tr1) cells in upper small intestine. Functionally, produced by the cleavage by papain allergen. After cleavage, moves to the plasma membrane and homooligomerizes within the membrane and forms pores of 10-15 nanometers (nm) of inner diameter, allowing the specific release of mature interleukin-33 (IL33), promoting type 2 inflammatory immune response. The protein is Gasdermin-D of Mus musculus (Mouse).